The chain runs to 317 residues: Ribosomal protein L11 methyltransferase (317 aa).

S-adenosyl-L-methionine-binding residues include threonine 158, glycine 179, aspartate 201, and asparagine 244.

It belongs to the methyltransferase superfamily. PrmA family.

The protein localises to the cytoplasm. The enzyme catalyses L-lysyl-[protein] + 3 S-adenosyl-L-methionine = N(6),N(6),N(6)-trimethyl-L-lysyl-[protein] + 3 S-adenosyl-L-homocysteine + 3 H(+). Functionally, methylates ribosomal protein L11. This chain is Ribosomal protein L11 methyltransferase, found in Lactococcus lactis subsp. lactis (strain IL1403) (Streptococcus lactis).